The chain runs to 247 residues: 5'-nucleotidase SurE (247 aa).

A divalent metal cation contacts are provided by aspartate 8, aspartate 9, serine 39, and asparagine 91.

Belongs to the SurE nucleotidase family. Requires a divalent metal cation as cofactor.

It localises to the cytoplasm. It carries out the reaction a ribonucleoside 5'-phosphate + H2O = a ribonucleoside + phosphate. Nucleotidase that shows phosphatase activity on nucleoside 5'-monophosphates. The polypeptide is 5'-nucleotidase SurE (Nitrosomonas eutropha (strain DSM 101675 / C91 / Nm57)).